Here is a 41-residue protein sequence, read N- to C-terminus: Large ribosomal subunit protein bL36 (41 aa).

This sequence belongs to the bacterial ribosomal protein bL36 family.

This chain is Large ribosomal subunit protein bL36, found in Rickettsia massiliae (strain Mtu5).